A 362-amino-acid chain; its full sequence is Notoamide biosynthesis cluster protein J' (362 aa).

Positions 1–22 (MRNMATMLHLLTLILLTSPAST) are cleaved as a signal peptide. Residues Asn157, Asn190, Asn280, and Asn338 are each glycosylated (N-linked (GlcNAc...) asparagine).

Its function is as follows. Part of the gene cluster that mediates the biosynthesis of notoamide, a fungal indole alkaloid that belongs to a family of natural products containing a characteristic bicyclo[2.2.2]diazaoctane core. The first step of notoamide biosynthesis involves coupling of L-proline and L-tryptophan by the bimodular NRPS notE', to produce cyclo-L-tryptophan-L-proline called brevianamide F. The reverse prenyltransferase notF' then acts as a deoxybrevianamide E synthase and converts brevianamide F to deoxybrevianamide E via reverse prenylation at C-2 of the indole ring leading to the bicyclo[2.2.2]diazaoctane core. Deoxybrevianamide E is further hydroxylated at C-6 of the indole ring, likely catalyzed by the cytochrome P450 monooxygenase notG', to yield 6-hydroxy-deoxybrevianamide E. 6-hydroxy-deoxybrevianamide E is a specific substrate of the prenyltransferase notC' for normal prenylation at C-7 to produce 6-hydroxy-7-prenyl-deoxybrevianamide, also called notoamide S. As the proposed pivotal branching point in notoamide biosynthesis, notoamide S can be diverted to notoamide E through an oxidative pyran ring closure putatively catalyzed by either notH' cytochrome P450 monooxygenase or the notD' FAD-linked oxidoreductase. This step would be followed by an indole 2,3-epoxidation-initiated pinacol-like rearrangement catalyzed by the notB' FAD-dependent monooxygenase leading to the formation of notoamide C and notoamide D. On the other hand notoamide S is converted to notoamide T by notH' (or notD'), a bifunctional oxidase that also functions as the intramolecular Diels-Alderase responsible for generation of (-)-notoamide T. To generate antipodal (+)-notoaminide T, notH (or notD) in Aspergillus strain MF297-2 is expected to catalyze a Diels-Alder reaction leading to the opposite stereochemistry. The remaining oxidoreductase notD' (or notH') likely catalyzes the oxidative pyran ring formation to yield (-)-stephacidin A. The FAD-dependent monooxygenase notI' is highly similar to notB' and is predicted to catalyze a similar conversion from (-)-stephacidin A to (+)-notoamide B via the 2,3-epoxidation of (-)-stephacidin A followed by a pinacol-type rearrangement. Finally, it remains unclear which enzyme could be responsible for the final hydroxylation steps leading to notoamide A and sclerotiamide. The function of notJ' in the notoamide biosynthesis has not been determined yet. The polypeptide is Notoamide biosynthesis cluster protein J' (Aspergillus versicolor).